Consider the following 265-residue polypeptide: Probable esterase tazC (265 aa).

Catalysis depends on charge relay system residues serine 119, aspartate 209, and histidine 236.

Belongs to the LovG family.

It participates in secondary metabolite biosynthesis. Probable esterase; part of the gene cluster that mediates the biosynthesis of azaterrilone A and other azaphilones, a class of fungal metabolites characterized by a highly oxygenated pyrano-quinone bicyclic core and exhibiting a broad range of bioactivities. The first step of the pathway begins with the non-reducing polyketide synthase tazA that assembles one acetyl-CoA starter unit, five malonyl-CoA units, and catalyzes a series of Claisen condensations, methylation, PT-mediated cyclization, and finally releases the first hexaketide precursor through the R-domain. The tazA product then undergoes reduction on its terminal ketone and the following pyran-ring formation by yet undetermined enzyme(s). Dehydration and enoyl reduction, possibly involving the trans-enoyl reductase tazE leads to the next intermediate. TazD is predicted as an acetyltransferase and might catalyze the acetylation steps leading to the synthesis of azaterrilone A. Azaterrilone A is not the final product of the taz pathway and both the highly reducing polyketide synthase tazB and the dual enzyme tazHJ catalyze late steps of the pathway, leading to the production of the 2 final stereoisomers that contain additional polyketide modification whose structures have still to be determined. In Aspergillus terreus (strain NIH 2624 / FGSC A1156), this protein is Probable esterase tazC.